The primary structure comprises 950 residues: Nonsense-mediated mRNA decay factor SMG8 (950 aa).

Disordered stretches follow at residues 560–607 and 624–651; these read HTGK…LSPT and NESQ…ADTE. Residues 568 to 582 show a composition bias toward acidic residues; it reads QDEDGEEDAEDEEGQ. Residues 593-607 show a composition bias toward polar residues; the sequence is QNTASNGCSQPLSPT. The segment covering 624 to 648 has biased composition (low complexity); the sequence is NESQASSEQLSNSEQNSTSSGTSSA.

The protein belongs to the SMG8 family.

Its function is as follows. Involved in nonsense-mediated decay (NMD) of mRNAs containing premature stop codons. Probable component of kinase complex containing nonC and recruited to stalled ribosomes. This is Nonsense-mediated mRNA decay factor SMG8 from Drosophila yakuba (Fruit fly).